The chain runs to 347 residues: MTEALVVDDSHFMRTVISDILEDGGVDVVGTAENGARALDAVTDVQPDVITMDVEMPEMDGIEATAEIMREQPTPILMVSALTTEDADATLEAMEKGAIDTFAKPGGTISTELSGHSEELVAAVERVASADPTAGHDVEMEPASPPDATTSEYADNPTLLIGASTGGPNVVESILASLPAEADFRVLIVQHMPDQFTSRFADRLDAASQYDITEAEDGSRIGGGEGLVARGDYHMRVSGYSNGRLRVRLDQSERLHSVRPAIDVTFKSAAERVTDPLVSVVLTGMGSDGADGVRAVKDAGGATLAQNEATSAVFGIPERAIETGCVDDVLPVDQLTEAIADSIRRTT.

One can recognise a Response regulatory domain in the interval 3–119 (EALVVDDSHF…STELSGHSEE (117 aa)). D53 is modified (4-aspartylphosphate). Positions 132-154 (PTAGHDVEMEPASPPDATTSEYA) are disordered. A CheB-type methylesterase domain is found at 152 to 346 (EYADNPTLLI…EAIADSIRRT (195 aa)). Active-site residues include S164, H191, and D288.

It belongs to the CheB family. Post-translationally, phosphorylated by CheA. Phosphorylation of the N-terminal regulatory domain activates the methylesterase activity.

The protein localises to the cytoplasm. The catalysed reaction is [protein]-L-glutamate 5-O-methyl ester + H2O = L-glutamyl-[protein] + methanol + H(+). It carries out the reaction L-glutaminyl-[protein] + H2O = L-glutamyl-[protein] + NH4(+). In terms of biological role, involved in the modulation of the chemotaxis system; catalyzes the demethylation of specific methylglutamate residues introduced into the Htr transducer proteins (methyl-accepting chemotaxis proteins) by CheR. Also required for Htr deamidations, at least at a specific glutamine-glutamate pair in HTR-II and a specific aspartate-glutamine pair in Htr4. The chain is Protein-glutamate methylesterase/protein-glutamine glutaminase from Halobacterium salinarum (strain ATCC 29341 / DSM 671 / R1).